Here is a 423-residue protein sequence, read N- to C-terminus: Serine--tRNA ligase (423 aa).

Residue 229-231 (TAE) coordinates L-serine. Residue 260–262 (RKE) coordinates ATP. Position 283 (E283) interacts with L-serine. 347–350 (EVSS) contributes to the ATP binding site. S383 contributes to the L-serine binding site.

Belongs to the class-II aminoacyl-tRNA synthetase family. Type-1 seryl-tRNA synthetase subfamily. As to quaternary structure, homodimer. The tRNA molecule binds across the dimer.

The protein resides in the cytoplasm. It catalyses the reaction tRNA(Ser) + L-serine + ATP = L-seryl-tRNA(Ser) + AMP + diphosphate + H(+). The catalysed reaction is tRNA(Sec) + L-serine + ATP = L-seryl-tRNA(Sec) + AMP + diphosphate + H(+). Its pathway is aminoacyl-tRNA biosynthesis; selenocysteinyl-tRNA(Sec) biosynthesis; L-seryl-tRNA(Sec) from L-serine and tRNA(Sec): step 1/1. Its function is as follows. Catalyzes the attachment of serine to tRNA(Ser). Is also able to aminoacylate tRNA(Sec) with serine, to form the misacylated tRNA L-seryl-tRNA(Sec), which will be further converted into selenocysteinyl-tRNA(Sec). The polypeptide is Serine--tRNA ligase (Chloroflexus aurantiacus (strain ATCC 29366 / DSM 635 / J-10-fl)).